We begin with the raw amino-acid sequence, 557 residues long: 6-methylpretetramide 4-monooxygenase (557 aa).

FAD contacts are provided by residues 9–38 (QVLI…VIDR) and 278–288 (MRSGRCFVAGD). The segment at 530–557 (LPEDTAPGAGDSAGRPAPDGTRRGVTTE) is disordered.

The protein belongs to the PheA/TfdB FAD monooxygenase family. Requires FAD as cofactor.

It carries out the reaction 6-methylpretetramide + NADPH + O2 + 2 H(+) = 4-hydroxy-6-methylpretetramide + NADP(+) + H2O. It catalyses the reaction 4-hydroxy-6-methylpretetramide + NADPH + O2 = 4-dedimethylamino-4-oxo-anhydrotetracycline + NADP(+) + H2O. It participates in antibiotic biosynthesis; oxytetracycline biosynthesis. Involved in the biosynthesis of the tetracycline antibiotic, oxytetracycline. Catalyzes the double hydroxylation of 6-methylpretetramide to yield 4-keto-anhydrotetracycline, via the insertion of oxygen atoms at the C-12a and C-4 positions of 6-pretetramid. The chain is 6-methylpretetramide 4-monooxygenase from Streptomyces rimosus.